The primary structure comprises 115 residues: Ribonuclease P protein component (115 aa).

It belongs to the RnpA family. In terms of assembly, consists of a catalytic RNA component (M1 or rnpB) and a protein subunit.

It catalyses the reaction Endonucleolytic cleavage of RNA, removing 5'-extranucleotides from tRNA precursor.. In terms of biological role, RNaseP catalyzes the removal of the 5'-leader sequence from pre-tRNA to produce the mature 5'-terminus. It can also cleave other RNA substrates such as 4.5S RNA. The protein component plays an auxiliary but essential role in vivo by binding to the 5'-leader sequence and broadening the substrate specificity of the ribozyme. The chain is Ribonuclease P protein component from Staphylococcus aureus (strain Mu3 / ATCC 700698).